We begin with the raw amino-acid sequence, 225 residues long: UPF0758 protein Shew185_0376 (225 aa).

The MPN domain occupies 102–224; the sequence is VLTNPDLTRD…IVSFAERGWI (123 aa). Residues histidine 173, histidine 175, and aspartate 186 each coordinate Zn(2+). The short motif at 173–186 is the JAMM motif element; sequence HNHPSGNAEPSQAD.

Belongs to the UPF0758 family.

This Shewanella baltica (strain OS185) protein is UPF0758 protein Shew185_0376.